The sequence spans 608 residues: MATVIAAHFVSRSSHLSIHALETKANNLSHTGPWTQTITPNGLRSLNTMDKLQMKTQSKAVKKVSATGNGRPAAKIICGHGMNLIFVGAEVGPWSKTGGLGDVLGGLPPAMAARGHRVMTVSPRYDQYKDAWDTSVSVEIKIGDRIETVRFFHSYKRGVDRVFVDHPMFLEKVWGKTGSKIYGPRAGLDYQDNQLRFSLLCLAALEAPRVLNLNSSKNFSGPYGEEVAFIANDWHTALLPCYLKAIYQPMGIYKHAKVAFCIHNIAYQGRFAFSDFPRLNLPDKFKSSFDFIDGYEKPVKGRKINWMKAGILESDRVLTVSPYYAQEVISGVERGVELDNFIRKTGIAGIINGMDVQEWNPVTDKYIDIHYDATTVMDAKPLLKEALQAEVGLPVDRNVPLIGFIGRLEEQKGSDIFVAAISQLVEHNVQIVILGTGKKKFEKQIEHLEVLYPDKARGVAKFNVPLAHMITAGADFMLVPSRFEPCGLIQLHAMRYGTVPIVASTGGLVDTVKEGYTGFQMGALHVECDKIDSADVAAIVKTVARALGTYATAALREMILNCMAQDLSWKGPARMWEKMLLDLEVTGSEPGTEGEEIAPLAKENVPTP.

A chloroplast-targeting transit peptide spans methionine 1–cysteine 78. ADP-alpha-D-glucose is bound at residue lysine 96. Residues glycine 587–proline 608 form a disordered region.

Belongs to the glycosyltransferase 1 family. Bacterial/plant glycogen synthase subfamily. Synthesized in a number of different organs, but most abundantly in tubers.

It is found in the plastid. It localises to the chloroplast. The protein resides in the amyloplast. The catalysed reaction is an NDP-alpha-D-glucose + [(1-&gt;4)-alpha-D-glucosyl](n) = [(1-&gt;4)-alpha-D-glucosyl](n+1) + a ribonucleoside 5'-diphosphate + H(+). Its pathway is glycan biosynthesis; starch biosynthesis. Its function is as follows. Responsible for the synthesis of amylose in reserve starch. This Manihot esculenta (Cassava) protein is Granule-bound starch synthase 1, chloroplastic/amyloplastic (WAXY).